A 131-amino-acid chain; its full sequence is Monothiol glutaredoxin-S6 (131 aa).

The region spanning 31–131 is the Glutaredoxin domain; that stretch reads SAFVQNAIYS…KLLGNSQSQR (101 aa). Residue C51 coordinates [2Fe-2S] cluster.

It belongs to the glutaredoxin family. CPYC subfamily.

It is found in the cytoplasm. Functionally, may only reduce GSH-thiol disulfides, but not protein disulfides. The chain is Monothiol glutaredoxin-S6 (GRXS6) from Oryza sativa subsp. japonica (Rice).